The primary structure comprises 61 residues: Conotoxin TxMRCL-04 (61 aa).

A signal peptide spans 1-22 (MRCLPVFVILLLLIASTPSVDA). A propeptide spanning residues 23–46 (QLKTKDDMSLASFHDNVKRILQIR) is cleaved from the precursor.

The protein belongs to the conotoxin T superfamily. In terms of processing, contains 2 disulfide bonds that can be either 'C1-C3, C2-C4' or 'C1-C4, C2-C3', since these disulfide connectivities have been observed for conotoxins with cysteine framework V (for examples, see AC P0DQQ7 and AC P81755). Expressed by the venom duct.

It localises to the secreted. This chain is Conotoxin TxMRCL-04, found in Conus textile (Cloth-of-gold cone).